Here is a 505-residue protein sequence, read N- to C-terminus: Cytochrome P450 monooxygenase efuB (505 aa).

The helical transmembrane segment at G12–Y34 threads the bilayer. Position 450 (C450) interacts with heme.

The protein belongs to the cytochrome P450 family. It depends on heme as a cofactor.

Its subcellular location is the membrane. It functions in the pathway secondary metabolite biosynthesis; terpenoid biosynthesis. In terms of biological role, cytochrome P450 monooxygenase; part of the gene cluster that mediates the biosynthesis of enfumafungin, a glycosylated fernene-type triterpenoid with potent antifungal activity, mediated by its interaction with beta-1,3-glucan synthase and the fungal cell wall. The pathway begins with the terpene cyclase-glycosyl transferase fusion protein that most likely uses 2,3-oxidosqualene as substrate and catalyzes glycosylation immediately after cyclization. The fernene glycoside then could be processed by the desaturase efuI which catalyzes isomerization of a double bond established by efuA to form the core structure. The latter would then undergo a series of hydroxylations in unknown order at C-2, C-19, C-23 and C-25, which would be catalyzed by two of the three cytochrome P450 monooxygenases efuB, efuG or efuH. The hydroxy-group at C-25 becomes oxidized by the dehydrogenase efuE to enable a spontaneous, non-enzymatic hemiacetal formation with C-23. After hydroxylation at C-2, acetylation by the acetyltransferase efuC takes place. The final steps in enfumafungin biosynthesis require expansion of the 5-membered ring by lactonization via a Baeyer-Villiger reaction mediated by one of the BGC's cytochrome P450 monooxygenases (efuB, efuG or efuH) followed by ring cleavage. This type of reaction would establish a double bond between C-20 and C-21 which could be reduced by the reductase efuL to form the final product. The sequence is that of Cytochrome P450 monooxygenase efuB from Hormonema carpetanum.